Consider the following 95-residue polypeptide: Large ribosomal subunit protein bL28 (95 aa).

The protein belongs to the bacterial ribosomal protein bL28 family.

The protein is Large ribosomal subunit protein bL28 of Zymomonas mobilis subsp. mobilis (strain ATCC 31821 / ZM4 / CP4).